Consider the following 324-residue polypeptide: NAD(P)H-dependent D-xylose reductase xyl1 (324 aa).

The active-site Proton donor is tyrosine 50. Histidine 112 lines the substrate pocket. Residues 168–169 (SN), 217–226 (SSFGPTGFME), and 273–283 (KTSRPEVMAQN) each bind NAD(+).

The protein belongs to the aldo/keto reductase family.

The catalysed reaction is an alditol + NAD(+) = an aldose + NADH + H(+). It carries out the reaction an alditol + NADP(+) = an aldose + NADPH + H(+). The enzyme catalyses xylitol + NAD(+) = D-xylose + NADH + H(+). It catalyses the reaction xylitol + NADP(+) = D-xylose + NADPH + H(+). It participates in carbohydrate metabolism; D-xylose degradation. The protein operates within carbohydrate degradation; L-arabinose degradation via L-arabinitol; D-xylulose 5-phosphate from L-arabinose (fungal route): step 1/5. Catalyzes the initial reaction in the xylose utilization pathway by reducing D-xylose into xylitol. Xylose is a major component of hemicelluloses such as xylan. Most fungi utilize D-xylose via three enzymatic reactions, xylose reductase (XR), xylitol dehydrogenase (XDH), and xylulokinase, to form xylulose 5-phosphate, which enters pentose phosphate pathway. Also major aldose reductase in pentose and D-galactose catabolism. Reduces the pentose L-arabinose and the hexose D-galactose to their respective polyols. Responsible for extracellular beta-galactosidase formation and cellulase induction during growth on lactose. This Hypocrea jecorina (Trichoderma reesei) protein is NAD(P)H-dependent D-xylose reductase xyl1 (xyl1).